Here is a 501-residue protein sequence, read N- to C-terminus: Armadillo repeat-containing protein 6 (501 aa).

A Phosphoserine modification is found at S64. 4 ARM repeats span residues 220–264 (GVLP…HAHN), 274–318 (KGLK…DLGG), 319–369 (LSIL…RAGG), and 370–412 (TESI…VEGG). At H263 the chain carries Pros-methylhistidine.

The protein belongs to the ARMC6 family. Post-translationally, methylated at His-263 by METTL9.

The polypeptide is Armadillo repeat-containing protein 6 (ARMC6) (Homo sapiens (Human)).